Here is a 1627-residue protein sequence, read N- to C-terminus: DNA topoisomerase 2-beta (1627 aa).

ATP-binding positions include Asn-117, Asn-146, 174-176 (SSN), and 187-194 (GRNGYGAK). An interaction with DNA region spans residues 368–370 (KKK). 402–404 (QTK) contacts ATP. Residues 481-598 (CTLILTEGDS…SLLKHGFLEE (118 aa)) form the Toprim domain. Mg(2+) is bound by residues Glu-487, Asp-567, and Asp-569. The Topo IIA-type catalytic domain maps to 741 to 1194 (IPSLVDGLKP…SASDLWKEDL (454 aa)). Tyr-831 serves as the catalytic O-(5'-phospho-DNA)-tyrosine intermediate. Residues 1016–1025 (KLQTSLTCNS) are interaction with DNA. Disordered stretches follow at residues 1115–1144 (AWKEAQEKAAEEEDPQNANDDASSASGSTS), 1224–1248 (KVGKPKMKKLQLEETMPSPFGRRIV), 1283–1365 (EFGG…DSLL), and 1378–1627 (DFSK…DMFN). Over residues 1131 to 1144 (NANDDASSASGSTS) the composition is skewed to low complexity. A compositionally biased stretch (polar residues) spans 1296-1305 (TVNTAASGTK). Basic and acidic residues predominate over residues 1339 to 1349 (PWSDDESKSES). Acidic residues-rich tracts occupy residues 1381–1392 (KEEDDAHDDDDA) and 1412–1428 (REDEFVPSDSVEKDEYD). Basic and acidic residues-rich tracts occupy residues 1436–1448 (PSPEKMSQEKKNQ) and 1462–1471 (KTDDDTTKLD). Composition is skewed to basic residues over residues 1542-1552 (GKGRGAKKRKT) and 1566-1578 (KAPKSTPCKKSKK). Positions 1616-1627 (ESDEDDDFDMFN) are enriched in acidic residues.

Belongs to the type II topoisomerase family. As to quaternary structure, homodimer. The cofactor is Mg(2+). Requires Mn(2+) as cofactor. Ca(2+) serves as cofactor.

The protein resides in the nucleus. The protein localises to the nucleolus. It localises to the nucleoplasm. The catalysed reaction is ATP-dependent breakage, passage and rejoining of double-stranded DNA.. Functionally, key decatenating enzyme that alters DNA topology by binding to two double-stranded DNA molecules, generating a double-stranded break in one of the strands, passing the intact strand through the broken strand, and religating the broken strand. Plays a role in B-cell differentiation. The chain is DNA topoisomerase 2-beta (TOP2B) from Gallus gallus (Chicken).